The sequence spans 333 residues: MNQWMELAERVLDGGEVTEKEALSILECPDDDVLLLMHAAFQIRKRYYGKKVKLNMIMNAKSGLCPENCGYCSQSSISKAPIDSYRMVDKTTLLEGAKRAHDLNIGTYCIVASGRGPSNREVDQVVDAVKEIKETYGLKICACLGLLKPGQAERLKEAGVDRYNHNINTSKTNHSNITTSHTYDDRVNTVETAKKSGMSPCSGVIVGMKETKQDVVDMAKSLKALDADSIPVNFLHAIDGTPLEGVNELNPLYCLKVLALFRFINPTKEIRISGGREVNLRSLQPLGLYAANSIFVGDYLTTAGQNETEDHKMLHDLGFEVESVEEMKASLQR.

The Radical SAM core domain occupies 47 to 276 (YYGKKVKLNM…TKEIRISGGR (230 aa)). Residues Cys65, Cys69, and Cys72 each contribute to the [4Fe-4S] cluster site. [2Fe-2S] cluster is bound by residues Cys109, Cys141, Cys201, and Arg271.

It belongs to the radical SAM superfamily. Biotin synthase family. Homodimer. [4Fe-4S] cluster is required as a cofactor. It depends on [2Fe-2S] cluster as a cofactor.

It catalyses the reaction (4R,5S)-dethiobiotin + (sulfur carrier)-SH + 2 reduced [2Fe-2S]-[ferredoxin] + 2 S-adenosyl-L-methionine = (sulfur carrier)-H + biotin + 2 5'-deoxyadenosine + 2 L-methionine + 2 oxidized [2Fe-2S]-[ferredoxin]. It functions in the pathway cofactor biosynthesis; biotin biosynthesis; biotin from 7,8-diaminononanoate: step 2/2. Functionally, catalyzes the conversion of dethiobiotin (DTB) to biotin by the insertion of a sulfur atom into dethiobiotin via a radical-based mechanism. This chain is Biotin synthase, found in Bacillus licheniformis (strain ATCC 14580 / DSM 13 / JCM 2505 / CCUG 7422 / NBRC 12200 / NCIMB 9375 / NCTC 10341 / NRRL NRS-1264 / Gibson 46).